Here is a 260-residue protein sequence, read N- to C-terminus: Ribonuclease PH (260 aa).

Phosphate is bound by residues arginine 88 and 126–128 (GTR).

The protein belongs to the RNase PH family. As to quaternary structure, homohexameric ring arranged as a trimer of dimers.

The catalysed reaction is tRNA(n+1) + phosphate = tRNA(n) + a ribonucleoside 5'-diphosphate. Phosphorolytic 3'-5' exoribonuclease that plays an important role in tRNA 3'-end maturation. Removes nucleotide residues following the 3'-CCA terminus of tRNAs; can also add nucleotides to the ends of RNA molecules by using nucleoside diphosphates as substrates, but this may not be physiologically important. Probably plays a role in initiation of 16S rRNA degradation (leading to ribosome degradation) during starvation. In Mycolicibacterium gilvum (strain PYR-GCK) (Mycobacterium gilvum (strain PYR-GCK)), this protein is Ribonuclease PH.